The sequence spans 209 residues: MSKNKVSASSGRWLKEHFDDKYVLEAQKRGYRSRAIFKIEEIQNKDKLLKPGMTVVDLGAAPGGWSQYAVEQVGDEGQVIACDILPMDSIAGVSFLQGDFREEAVLDALLERIQPDMVDVVMSDMAPNMSGNLAVDQPRAMYLVELALDMCRQVLAPNGSFTVKVFQGEGFDQYLQEVRNMFKVVKIRKPDSSRARSREVYIVATGYKG.

S-adenosyl-L-methionine contacts are provided by Gly63, Trp65, Asp83, Asp99, and Asp124. Residue Lys164 is the Proton acceptor of the active site.

It belongs to the class I-like SAM-binding methyltransferase superfamily. RNA methyltransferase RlmE family.

It localises to the cytoplasm. It catalyses the reaction uridine(2552) in 23S rRNA + S-adenosyl-L-methionine = 2'-O-methyluridine(2552) in 23S rRNA + S-adenosyl-L-homocysteine + H(+). In terms of biological role, specifically methylates the uridine in position 2552 of 23S rRNA at the 2'-O position of the ribose in the fully assembled 50S ribosomal subunit. The sequence is that of Ribosomal RNA large subunit methyltransferase E from Aliivibrio fischeri (strain ATCC 700601 / ES114) (Vibrio fischeri).